A 184-amino-acid polypeptide reads, in one-letter code: Outer-membrane lipoprotein carrier protein (184 aa).

The N-terminal stretch at M1–A19 is a signal peptide.

The protein belongs to the LolA family. As to quaternary structure, monomer.

The protein resides in the periplasm. In terms of biological role, participates in the translocation of lipoproteins from the inner membrane to the outer membrane. Only forms a complex with a lipoprotein if the residue after the N-terminal Cys is not an aspartate (The Asp acts as a targeting signal to indicate that the lipoprotein should stay in the inner membrane). In Helicobacter pylori (strain HPAG1), this protein is Outer-membrane lipoprotein carrier protein.